The sequence spans 1200 residues: PAN2-PAN3 deadenylation complex catalytic subunit Pan2 (1200 aa).

WD repeat units lie at residues Asp153 to Ala193, Glu195 to Glu231, Val244 to Pro280, and Pro328 to Pro367. Positions Tyr368–His484 are linker. Positions Thr485 to Arg923 constitute a USP domain. Position 784 is a phosphoserine (Ser784). One can recognise an Exonuclease domain in the interval Val974 to Tyr1146. 4 residues coordinate a divalent metal cation: Asp977, Glu979, Asp1086, and Asp1138. At Ser1188 the chain carries Phosphoserine.

The protein belongs to the peptidase C19 family. PAN2 subfamily. Forms a heterotrimer with an asymmetric homodimer of the regulatory subunit PAN3 to form the poly(A)-nuclease (PAN) deadenylation complex. Interacts with PAN3 isoform 1/Pan3L and isoform 3/Pan3S. Interacts with ZFP36. It depends on a divalent metal cation as a cofactor.

The protein localises to the cytoplasm. The protein resides in the P-body. It localises to the nucleus. It carries out the reaction Exonucleolytic cleavage of poly(A) to 5'-AMP.. Its activity is regulated as follows. Positively regulated by the regulatory subunit PAN3. In terms of biological role, catalytic subunit of the poly(A)-nuclease (PAN) deadenylation complex, one of two cytoplasmic mRNA deadenylases involved in general and miRNA-mediated mRNA turnover. PAN specifically shortens poly(A) tails of RNA and the activity is stimulated by poly(A)-binding protein (PABP). PAN deadenylation is followed by rapid degradation of the shortened mRNA tails by the CCR4-NOT complex. Deadenylated mRNAs are then degraded by two alternative mechanisms, namely exosome-mediated 3'-5' exonucleolytic degradation, or deadenylation-dependent mRNA decaping and subsequent 5'-3' exonucleolytic degradation by XRN1. Also acts as an important regulator of the HIF1A-mediated hypoxic response. Required for HIF1A mRNA stability independent of poly(A) tail length regulation. This Mus musculus (Mouse) protein is PAN2-PAN3 deadenylation complex catalytic subunit Pan2.